Here is a 204-residue protein sequence, read N- to C-terminus: MERAVLLLSLLSLGVSSQPITDGQRLFSIAVSRVQHLHLLAQRIFSEFESSLQTEEQRQLNKIFLQDFCNSDYIISPIDKHETQRSSVLKLLSISYRLVESWEFPSRSLSGGSVSRNQISPKLSELKTGILLLIKASEDGAELFPDSSALQLAPYGNYYQSLSTDESLRRTYELLACFKKDMHKVETYLTVAKCRLSPEANCTL.

The signal sequence occupies residues 1–17 (MERAVLLLSLLSLGVSS). Position 18 is a pyrrolidone carboxylic acid (Gln18). His36 serves as a coordination point for Zn(2+). A disulfide bridge connects residues Cys69 and Cys177. Zn(2+) is bound at residue Glu186. Cys194 and Cys202 form a disulfide bridge.

This sequence belongs to the somatotropin/prolactin family.

The protein localises to the secreted. Growth hormone plays an important role in growth control and involved in the regulation of several anabolic processes. The protein is Somatotropin (gh) of Perca flavescens (American yellow perch).